Consider the following 146-residue polypeptide: Flavodoxin (146 aa).

The Flavodoxin-like domain maps to Ala4–Leu143.

The protein belongs to the flavodoxin family. FMN is required as a cofactor.

Its function is as follows. Electron-transfer proteins that function in various electron transport systems in microorganisms. Functionally interchangeable with ferredoxin. The polypeptide is Flavodoxin (Megalodesulfovibrio gigas (strain ATCC 19364 / DSM 1382 / NCIMB 9332 / VKM B-1759) (Desulfovibrio gigas)).